The primary structure comprises 111 residues: Large ribosomal subunit protein uL22 (111 aa).

Belongs to the universal ribosomal protein uL22 family. Part of the 50S ribosomal subunit.

Its function is as follows. This protein binds specifically to 23S rRNA; its binding is stimulated by other ribosomal proteins, e.g. L4, L17, and L20. It is important during the early stages of 50S assembly. It makes multiple contacts with different domains of the 23S rRNA in the assembled 50S subunit and ribosome. The globular domain of the protein is located near the polypeptide exit tunnel on the outside of the subunit, while an extended beta-hairpin is found that lines the wall of the exit tunnel in the center of the 70S ribosome. The sequence is that of Large ribosomal subunit protein uL22 from Polynucleobacter necessarius subsp. necessarius (strain STIR1).